Consider the following 1070-residue polypeptide: DNA-directed RNA polymerase subunit beta (1070 aa).

It belongs to the RNA polymerase beta chain family. In terms of assembly, in plastids the minimal PEP RNA polymerase catalytic core is composed of four subunits: alpha, beta, beta', and beta''. When a (nuclear-encoded) sigma factor is associated with the core the holoenzyme is formed, which can initiate transcription.

It localises to the plastid. Its subcellular location is the chloroplast. It carries out the reaction RNA(n) + a ribonucleoside 5'-triphosphate = RNA(n+1) + diphosphate. In terms of biological role, DNA-dependent RNA polymerase catalyzes the transcription of DNA into RNA using the four ribonucleoside triphosphates as substrates. This is DNA-directed RNA polymerase subunit beta from Buxus microphylla (Littleleaf boxwood).